Consider the following 229-residue polypeptide: Glutathione S-transferase 3 (229 aa).

Alanine 2 carries the blocked amino end (Ala) modification. Positions 3–83 (AKPVLYYFNG…YIAGKYNLYG (81 aa)) constitute a GST N-terminal domain. Residues tyrosine 9, 54 to 55 (QV), and 67 to 68 (QT) each bind glutathione. Residues 85–207 (DLKERALIDM…LAPGSKRKPI (123 aa)) form the GST C-terminal domain.

This sequence belongs to the GST superfamily. Alpha family. In terms of assembly, homodimer or heterodimer (with a subunit from group CL-4).

Its subcellular location is the cytoplasm. The catalysed reaction is RX + glutathione = an S-substituted glutathione + a halide anion + H(+). Functionally, catalyzes the conjugation of GSH to a wide variety of electrophilic alkylating agents. Also involved in the metabolism of lipid hydroperoxides, prostaglandins and leukotriene A4 and in binding of non-substrate hydrophobic ligands such as bile acids, a number of drugs and thyroid hormones. This GST does not exhibit peroxidase activity. This Gallus gallus (Chicken) protein is Glutathione S-transferase 3.